Reading from the N-terminus, the 98-residue chain is ACCARLCCSVPTSPATTICSSDKFCRCGVCLPSTCPHTVWLLQPTCCCDNRPPPYHVPQPSVPTCFLLNSSQPTPGLESINLTTYTQSSCEPCIPSCC.

Residue alanine 1 is modified to N-acetylalanine.

The protein belongs to the KRTAP type 3 family. In terms of assembly, interacts with wool keratins. In terms of tissue distribution, wool.

In terms of biological role, in the wool cortex, wool keratin intermediate filaments are embedded in an interfilamentous matrix, consisting of hair keratin-associated proteins (KRTAP), which are essential for the formation of a rigid and resistant wool shaft through their extensive disulfide bond cross-linking with abundant cysteine residues of wool keratins. The matrix proteins include the high-sulfur and high-glycine-tyrosine keratins. This chain is Keratin, high sulfur matrix protein, IIIB3, found in Ovis aries (Sheep).